Consider the following 148-residue polypeptide: Auxin-responsive protein SAUR65 (148 aa).

Belongs to the ARG7 family.

It is found in the cell membrane. Functionally, may promote auxin-stimulated organ elongation, such as hypocotyls, stamen filaments and petals. The sequence is that of Auxin-responsive protein SAUR65 from Arabidopsis thaliana (Mouse-ear cress).